The sequence spans 868 residues: DNA mismatch repair protein MutS (868 aa).

Residue 620–627 coordinates ATP; that stretch reads GPNMSGKS.

This sequence belongs to the DNA mismatch repair MutS family.

This protein is involved in the repair of mismatches in DNA. It is possible that it carries out the mismatch recognition step. This protein has a weak ATPase activity. The polypeptide is DNA mismatch repair protein MutS (Flavobacterium johnsoniae (strain ATCC 17061 / DSM 2064 / JCM 8514 / BCRC 14874 / CCUG 350202 / NBRC 14942 / NCIMB 11054 / UW101) (Cytophaga johnsonae)).